A 168-amino-acid polypeptide reads, in one-letter code: Small ribosomal subunit protein uS5 (168 aa).

Residues I17 to V80 enclose the S5 DRBM domain.

This sequence belongs to the universal ribosomal protein uS5 family. In terms of assembly, part of the 30S ribosomal subunit. Contacts proteins S4 and S8.

With S4 and S12 plays an important role in translational accuracy. Its function is as follows. Located at the back of the 30S subunit body where it stabilizes the conformation of the head with respect to the body. This Lactobacillus acidophilus (strain ATCC 700396 / NCK56 / N2 / NCFM) protein is Small ribosomal subunit protein uS5.